We begin with the raw amino-acid sequence, 104 residues long: Large ribosomal subunit protein uL24 (104 aa).

The protein belongs to the universal ribosomal protein uL24 family. As to quaternary structure, part of the 50S ribosomal subunit.

In terms of biological role, one of two assembly initiator proteins, it binds directly to the 5'-end of the 23S rRNA, where it nucleates assembly of the 50S subunit. One of the proteins that surrounds the polypeptide exit tunnel on the outside of the subunit. This is Large ribosomal subunit protein uL24 from Shewanella denitrificans (strain OS217 / ATCC BAA-1090 / DSM 15013).